The sequence spans 87 residues: Small ribosomal subunit protein bS20 (87 aa).

Residues methionine 1–leucine 24 are disordered.

It belongs to the bacterial ribosomal protein bS20 family.

In terms of biological role, binds directly to 16S ribosomal RNA. This chain is Small ribosomal subunit protein bS20, found in Bordetella petrii (strain ATCC BAA-461 / DSM 12804 / CCUG 43448).